A 597-amino-acid polypeptide reads, in one-letter code: MCGAKSNLCSSKTLTEVEFMRQKSEDGASATCLLEFAACDDLSSFKREIEENPSVEIDESGFWYCRRVGSKKMGFEERTPLMVAAMYGSMEVLNYIIATGRSDVNRVCSDEKVTALHCAVSGCSVSIVEIIKILLDASASPNCVDANGNKPVDLLAKDSRFVPNQSRKAVEVLLTGIHGSVMEEEEEELKSVVTKYPADASLPDINEGVYGTDDFRMFSFKVKPCSRAYSHDWTECPFVHPGENARRRDPRKYPYTCVPCPEFRKGSCPKGDSCEYAHGVFESWLHPAQYRTRLCKDETGCARRVCFFAHRRDELRPVNASTGSAMVSPRSSNQSPEMSVMSPLTLGSSPMNSPMANGVPLSPRNGGLWQNRVNSLTPPPLQLNGSRLKSTLSARDMDMEMELRFRGLDNRRLGDLKPSNLEETFGSYDSASVMQLQSPSRHSQMNHYPSSPVRQPPPHGFESSAAMAAAVMNARSSAFAKRSLSFKPAPVASNVSDWGSPNGKLEWGMQRDELNKLRRSASFGIHGNNNNSVSRPARDYSDEPDVSWVNSLVKENAPERVNERVGNTVNGAASRDKFKLPSWAEQMYIDHEQQIVA.

ANK repeat units lie at residues 76–106 (EERT…DVNR) and 111–143 (EKVT…SPNC). 2 consecutive C3H1-type zinc fingers follow at residues 254 to 281 (PYTC…HGVF) and 289 to 313 (QYRT…HRRD). The segment covering 320–337 (ASTGSAMVSPRSSNQSPE) has biased composition (polar residues). Residues 320–341 (ASTGSAMVSPRSSNQSPEMSVM) form a disordered region.

As to expression, expressed in roots and anthers.

The protein localises to the nucleus. Functionally, involved in salt stress response. May positively modulate plant tolerance to salt stress. This chain is Zinc finger CCCH domain-containing protein 29, found in Arabidopsis thaliana (Mouse-ear cress).